Here is a 393-residue protein sequence, read N- to C-terminus: Zinc finger CCCH domain-containing protein 2 (393 aa).

Residues 1–71 (MDVVCTEHQM…NRENKEYCYD (71 aa)) form a disordered region. Residues 20–37 (RKLLLSSKSFPSDSSSPR) are compositionally biased toward low complexity. A compositionally biased stretch (basic and acidic residues) spans 60-69 (DNNRENKEYC). C3H1-type zinc fingers lie at residues 122 to 150 (QYSG…HGVF) and 159 to 181 (YRTE…AHSP).

In terms of assembly, interacts with MARD1/FLZ9 and RD21A. Specifically expressed in seeds.

The protein localises to the nucleus. Functionally, probable transcription repressor that functions as a negative regulator of phytochrome-mediated promotion of seed germination. Inhibits seed germination by regulating the expression of gibberellic acid (GA) and abscisic acid (ABA) metabolic genes. Does not regulate the expression of the DELLA genes RGA and RGA1. Activated by PIL5, a phytochrome-interacting basic helix-loop-helix transcription factor. Represses directly JMJ20 and JMJ22 expression in the absence of red light (R) and in far-red (FR) conditions. This chain is Zinc finger CCCH domain-containing protein 2, found in Arabidopsis thaliana (Mouse-ear cress).